Consider the following 134-residue polypeptide: Small ribosomal subunit protein uS11 (134 aa).

It belongs to the universal ribosomal protein uS11 family. In terms of assembly, part of the 30S ribosomal subunit. Interacts with proteins S7 and S18. Binds to IF-3.

Functionally, located on the platform of the 30S subunit, it bridges several disparate RNA helices of the 16S rRNA. Forms part of the Shine-Dalgarno cleft in the 70S ribosome. This is Small ribosomal subunit protein uS11 from Polaromonas naphthalenivorans (strain CJ2).